We begin with the raw amino-acid sequence, 389 residues long: Epidermis-specific secreted glycoprotein EP1 (389 aa).

Residues 1 to 24 form the signal peptide; sequence MARFFPLTLTILLFFIQRIDFCHT. N-linked (GlcNAc...) (complex) asparagine glycosylation is present at Asn29. Residues 88–193 form the Bulb-type lectin domain; sequence MRWVWEANRG…ASPGENVNGP (106 aa). N-linked (GlcNAc...) asparagine glycans are attached at residues Asn103, Asn230, and Asn235. Residue Asn274 is glycosylated (N-linked (GlcNAc...) (high mannose) asparagine).

As to expression, in 14-day old seedlings, expressed in the epidermis and apical dome of the shoot and in the hypocotyl, cotyledon and epidermis of the root. In developing seeds, expressed in both the inner and outer epidermis of the integument.

The protein localises to the secreted. Its function is as follows. May be involved in the limitation of water flow through the outer epidermal cell wall, either by direct modification of wall structure or as a signal instructing the protoplast to restrict water transport across the cell wall. The chain is Epidermis-specific secreted glycoprotein EP1 (EP1) from Daucus carota (Wild carrot).